The primary structure comprises 278 residues: 3-methyl-2-oxobutanoate hydroxymethyltransferase (278 aa).

2 residues coordinate Mg(2+): aspartate 43 and aspartate 82. 3-methyl-2-oxobutanoate contacts are provided by residues 43 to 44 (DS), aspartate 82, and lysine 112. Residue glutamate 114 participates in Mg(2+) binding. Glutamate 181 serves as the catalytic Proton acceptor.

It belongs to the PanB family. In terms of assembly, homodecamer; pentamer of dimers. The cofactor is Mg(2+).

Its subcellular location is the cytoplasm. The enzyme catalyses 3-methyl-2-oxobutanoate + (6R)-5,10-methylene-5,6,7,8-tetrahydrofolate + H2O = 2-dehydropantoate + (6S)-5,6,7,8-tetrahydrofolate. It functions in the pathway cofactor biosynthesis; (R)-pantothenate biosynthesis; (R)-pantoate from 3-methyl-2-oxobutanoate: step 1/2. Catalyzes the reversible reaction in which hydroxymethyl group from 5,10-methylenetetrahydrofolate is transferred onto alpha-ketoisovalerate to form ketopantoate. The polypeptide is 3-methyl-2-oxobutanoate hydroxymethyltransferase (Bacillus cereus (strain G9842)).